A 947-amino-acid chain; its full sequence is Protocadherin alpha-4 (947 aa).

The signal sequence occupies residues 1-29 (MEFSWGSGQESQRLLLSFLFLAIWEPGNS). Cadherin domains are found at residues 30 to 133 (QLHY…PPTF), 134 to 242 (PTTQ…SPVF), 243 to 350 (DRSL…APEL), 351 to 455 (EFKS…APAF), 456 to 565 (AQPE…APTL), and 573 to 681 (SGGI…APSR). At 30–697 (QLHYSIPEEA…NAEASLVDVN (668 aa)) the chain is on the extracellular side. A disulfide bridge links cysteine 96 with cysteine 102. N-linked (GlcNAc...) asparagine glycosylation is found at asparagine 257 and asparagine 265. N-linked (GlcNAc...) asparagine glycosylation occurs at asparagine 548. A helical membrane pass occupies residues 698–718 (VYLIIAICAVSSLLVLTLLLY). At 719 to 947 (SALRCSTVPS…GNSTTDNSDQ (229 aa)) the chain is on the cytoplasmic side. 6 PXXP repeats span residues 734–737 (PPKP), 774–777 (PSLS), 796–799 (PRQP), 829–832 (PGGP), 870–873 (PGNP), and 888–891 (PGSP). Positions 734-891 (PPKPVMVCSS…PDKFIIPGSP (158 aa)) are 6 X 4 AA repeats of P-X-X-P. Positions 738–947 (VMVCSSAVGS…GNSTTDNSDQ (210 aa)) are required for interaction with FYN. Disordered regions lie at residues 761–805 (GEYP…DWRY) and 824–853 (ILRA…EVSP). The tract at residues 897–947 (RQESANNQIDKSDFITFGKKEETKKKKKKKKGNKTQEKKEKGNSTTDNSDQ) is disordered. Over residues 906 to 920 (DKSDFITFGKKEETK) the composition is skewed to basic and acidic residues.

In terms of assembly, forms homodimers in trans (molecules expressed by two different cells). Forms promiscuous heterodimers in cis (at the plasma membrane of the same cell) with other protocadherins. Interacts with FYN. As to expression, detected in brain.

The protein resides in the cell membrane. Its function is as follows. Calcium-dependent cell-adhesion protein involved in cells self-recognition and non-self discrimination. Thereby, it is involved in the establishment and maintenance of specific neuronal connections in the brain. This Rattus norvegicus (Rat) protein is Protocadherin alpha-4.